The primary structure comprises 329 residues: GTPase Obg (329 aa).

The Obg domain maps to 1–159; it reads MQFIDQARIT…WFLQLELKLL (159 aa). In terms of domain architecture, OBG-type G spans 160–328; sequence AEVGIIGLPN…LLAQVWKELG (169 aa). ATP-binding positions include 166-173, 191-195, 213-216, 280-283, and 309-311; these read GLPNAGKS, FTTLV, DIPG, NKQE, and SAA. Positions 173 and 193 each coordinate Mg(2+).

This sequence belongs to the TRAFAC class OBG-HflX-like GTPase superfamily. OBG GTPase family. As to quaternary structure, monomer. It depends on Mg(2+) as a cofactor.

Its subcellular location is the cytoplasm. Functionally, an essential GTPase which binds GTP, GDP and possibly (p)ppGpp with moderate affinity, with high nucleotide exchange rates and a fairly low GTP hydrolysis rate. Plays a role in control of the cell cycle, stress response, ribosome biogenesis and in those bacteria that undergo differentiation, in morphogenesis control. This Prochlorococcus marinus (strain MIT 9303) protein is GTPase Obg.